A 483-amino-acid polypeptide reads, in one-letter code: MSDDLSKRSLRELVSQPYKYGFHTDIENEEFPKGLDEDIIKEISKLKCEPSYMLDFRLKSYILWKKMSLPEWACLTYLNINYQDIVYYSAPKNSTKLDSLEDVDKKILETFDKLGIPLNEQKKLANVAVDAIFDSVSVGTTFKQELSNVGVLFCPLSEATNKYSTLVEKYLGSVVPIGDNYFAALNSAVFSEGSFCYIPPNVKCPLELSTYFRINNENSGQFERTLIIADFNSYVSYLEGCTAPMYDKNQLHAAVVELIALENAEIRYSTVQNWYSGDTNGKGGIYNFVTKRGLCAGKSSKISWTQVETGSAITWKYPSCILVGEDSVGEFYSVALTNNYQQADTGTKMIHVGRGSKSRIISKGISAGYSKNTYRGQVKININALGSINNSQCDSMLIGPYSQANTYPYIQVSNAMSRVEHEASTSKIEEEQLFYFLQRGISVEQAISLLISGFCRDVFVKLPMEFAVEADKLLSVKLEGTVG.

Belongs to the iron-sulfur cluster assembly SufBD family.

It is found in the plastid. Its subcellular location is the chloroplast. The protein is Iron-sulfur cluster assembly SufBD family protein ycf24 (ycf24) of Guillardia theta (Cryptophyte).